The sequence spans 247 residues: Granzyme B(G,H) (247 aa).

A signal peptide spans Met1–Ala18. The propeptide at Gly19–Glu20 is activation peptide. In terms of domain architecture, Peptidase S1 spans Ile21–Lys245. A disulfide bridge connects residues Cys49 and Cys65. Catalysis depends on His64, which acts as the Charge relay system. An N-linked (GlcNAc...) asparagine glycan is attached at Asn71. Residue Asp108 is the Charge relay system of the active site. 2 disulfides stabilise this stretch: Cys142–Cys209 and Cys173–Cys188. Asn182 carries N-linked (GlcNAc...) asparagine glycosylation. Catalysis depends on Ser203, which acts as the Charge relay system.

It belongs to the peptidase S1 family. Granzyme subfamily.

The protein resides in the secreted. Its subcellular location is the cytolytic granule. The catalysed reaction is Preferential cleavage: -Asp-|-Xaa- &gt;&gt; -Asn-|-Xaa- &gt; -Met-|-Xaa-, -Ser-|-Xaa-.. Inactivated by the serine protease inhibitor diisopropylfluorophosphate. Abundant protease in the cytosolic granules of cytotoxic T-cells and NK-cells which activates caspase-independent pyroptosis when delivered into the target cell through the immunological synapse. It cleaves after Asp. Once delivered into the target cell, acts by catalyzing cleavage of gasdermin-E (GSDME), releasing the pore-forming moiety of GSDME, thereby triggering pyroptosis and target cell death. Seems to be linked to an activation cascade of caspases (aspartate-specific cysteine proteases) responsible for apoptosis execution. Cleaves caspase-3 and -9 (CASP3 and CASP9, respectively) to give rise to active enzymes mediating apoptosis. Cleaves and activates CASP7 in response to bacterial infection, promoting plasma membrane repair. This chain is Granzyme B(G,H) (Gzmb), found in Mus musculus (Mouse).